A 1331-amino-acid chain; its full sequence is NPC1-like intracellular cholesterol transporter 1 (1331 aa).

Residues Met1–Gly20 form the signal peptide. The Extracellular segment spans residues Glu21–Pro282. 9 cysteine pairs are disulfide-bonded: Cys32–Cys90, Cys38–Cys56, Cys77–Cys125, Cys91–Cys129, Cys113–Cys254, Cys116–Cys172, Cys189–Cys197, Cys243–Cys259, and Cys256–Cys263. N-linked (GlcNAc...) asparagine glycosylation is found at Asn53 and Asn85. Asn138 carries N-linked (GlcNAc...) asparagine glycosylation. Asn244 carries N-linked (GlcNAc...) asparagine glycosylation. A helical membrane pass occupies residues Gly283–Val303. Residues Arg304–Pro352 are Cytoplasmic-facing. A helical membrane pass occupies residues Leu353–Ile373. Topologically, residues Glu374–Asp632 are extracellular. 6 N-linked (GlcNAc...) asparagine glycosylation sites follow: Asn416, Asn431, Asn464, Asn479, Asn497, and Asn506. A disulfide bridge links Cys471 with Cys485. A disulfide bond links Cys525 and Cys542. Residues Asn606 and Asn626 are each glycosylated (N-linked (GlcNAc...) asparagine). The SSD domain maps to Asp632 to Leu797. Residues Leu633–Ser653 traverse the membrane as a helical segment. At Tyr654–Lys665 the chain is on the cytoplasmic side. Residues Ala666 to Phe686 traverse the membrane as a helical segment. Residues Tyr687–Leu696 lie on the Extracellular side of the membrane. The chain crosses the membrane as a helical span at residues Val697–Phe717. The Cytoplasmic portion of the chain corresponds to Val718 to Ser742. Residues Val743–Leu763 traverse the membrane as a helical segment. Over Thr764–Ser776 the chain is Extracellular. Residues Gly777–Leu797 traverse the membrane as a helical segment. Over Asp798–Arg846 the chain is Cytoplasmic. A helical transmembrane segment spans residues Pro847 to Ile867. The Extracellular segment spans residues Asn868–Gly1113. N-linked (GlcNAc...) asparagine glycosylation is found at Asn909 and Asn917. Disulfide bonds link Cys920–Cys925, Cys967–Cys1025, and Cys981–Cys990. Asn996, Asn1038, and Asn1076 each carry an N-linked (GlcNAc...) asparagine glycan. Residues Ile1114–Leu1134 form a helical membrane-spanning segment. Residues Asp1135 to Asn1142 are Cytoplasmic-facing. Residues Leu1143–Ser1163 traverse the membrane as a helical segment. The Extracellular segment spans residues Tyr1164–Asn1165. A helical transmembrane segment spans residues Ala1166 to Ile1186. Topologically, residues Thr1187–Thr1206 are cytoplasmic. The helical transmembrane segment at Val1207–Ile1227 threads the bilayer. The Extracellular portion of the chain corresponds to Leu1228–Arg1242. A helical transmembrane segment spans residues Leu1243–Leu1263. The Cytoplasmic segment spans residues Ser1264–Phe1331.

Belongs to the patched family. In terms of assembly, interacts with RAB11A, MYO5B and RAB11FIP2. Interaction with RAB11A, MYO5B and RAB11FIP2 is required for proper transport to the plasma membrane upon cholesterol depletion. Interacts with NPC2. Interacts with LIMA1. Highly glycosylated. Small intestine showed the highest level of expression. Expression in other tissues including gall bladder, liver, testis and stomach is also observed. Along the duodenum-ileum axis, the levels vary in different segments of the intestine with peak expression in the proximal jejunum. Protein expression is confined to the enterocyte. Discrete localization to the epithelial layer bordering the luminal space along the crypt-villus axis. Protein expression in the enterocyte is observed closest to the luminal space. Expression in enterocytes from the proximal (jejunum) but not in the distal (ileum) region.

The protein localises to the apical cell membrane. It is found in the cell membrane. The enzyme catalyses cholesterol(in) = cholesterol(out). The catalysed reaction is sitosterol(out) = sitosterol(in). In terms of biological role, plays a major role in cholesterol homeostasis. Critical for the uptake of cholesterol across the plasma membrane of the intestinal enterocyte. Involved in plant sterol absorption, it transports sitosterol, although at lower rates than cholesterol. Is the direct molecular target of ezetimibe, a drug that inhibits cholesterol absorption and is approved for the treatment of hypercholesterolemia. May have a function in the transport of multiple lipids and their homeostasis, thereby influencing lipid metabolism regulation. May be involved in caveolin trafficking from the plasma membrane. Acts as a negative regulator of NPC2 and down-regulates its expression and secretion by inhibiting its maturation and accelerating its degradation. This is NPC1-like intracellular cholesterol transporter 1 from Rattus norvegicus (Rat).